Consider the following 81-residue polypeptide: Putative snRNP Sm-like protein (81 aa).

One can recognise a Sm domain in the interval 13 to 81; the sequence is RPLDALGNSL…RGDNIVYISP (69 aa).

The protein belongs to the snRNP Sm proteins family.

This chain is Putative snRNP Sm-like protein, found in Methanothermobacter thermautotrophicus (strain ATCC 29096 / DSM 1053 / JCM 10044 / NBRC 100330 / Delta H) (Methanobacterium thermoautotrophicum).